The chain runs to 348 residues: Dihydroorotase (348 aa).

Zn(2+)-binding residues include His14 and His16. Substrate is bound by residues 16 to 18 (HLR) and Asn42. 3 residues coordinate Zn(2+): Lys100, His137, and His175. Lys100 is modified (N6-carboxylysine). His137 serves as a coordination point for substrate. Position 220 (Leu220) interacts with substrate. A Zn(2+)-binding site is contributed by Asp248. Asp248 is an active-site residue. Substrate is bound by residues His252 and Ala264.

It belongs to the metallo-dependent hydrolases superfamily. DHOase family. Class II DHOase subfamily. As to quaternary structure, homodimer. The cofactor is Zn(2+).

It catalyses the reaction (S)-dihydroorotate + H2O = N-carbamoyl-L-aspartate + H(+). It functions in the pathway pyrimidine metabolism; UMP biosynthesis via de novo pathway; (S)-dihydroorotate from bicarbonate: step 3/3. Its function is as follows. Catalyzes the reversible cyclization of carbamoyl aspartate to dihydroorotate. The polypeptide is Dihydroorotase (Ectopseudomonas mendocina (strain ymp) (Pseudomonas mendocina)).